The sequence spans 172 residues: Xanthine-guanine phosphoribosyltransferase (172 aa).

5-phospho-alpha-D-ribose 1-diphosphate-binding positions include 47 to 48 (RG) and 106 to 114 (DDLVDTGKT). Asp107 is a binding site for Mg(2+). Guanine contacts are provided by Asp110 and Ile153. Asp110 and Ile153 together coordinate xanthine. GMP is bound by residues 110-114 (DTGKT) and 152-153 (WI).

It belongs to the purine/pyrimidine phosphoribosyltransferase family. XGPT subfamily. Homotetramer. Mg(2+) serves as cofactor.

The protein resides in the cell inner membrane. The catalysed reaction is GMP + diphosphate = guanine + 5-phospho-alpha-D-ribose 1-diphosphate. It carries out the reaction XMP + diphosphate = xanthine + 5-phospho-alpha-D-ribose 1-diphosphate. It catalyses the reaction IMP + diphosphate = hypoxanthine + 5-phospho-alpha-D-ribose 1-diphosphate. It functions in the pathway purine metabolism; GMP biosynthesis via salvage pathway; GMP from guanine: step 1/1. The protein operates within purine metabolism; XMP biosynthesis via salvage pathway; XMP from xanthine: step 1/1. Functionally, purine salvage pathway enzyme that catalyzes the transfer of the ribosyl-5-phosphate group from 5-phospho-alpha-D-ribose 1-diphosphate (PRPP) to the N9 position of the 6-oxopurines guanine and xanthine to form the corresponding ribonucleotides GMP (guanosine 5'-monophosphate) and XMP (xanthosine 5'-monophosphate), with the release of PPi. To a lesser extent, also acts on hypoxanthine. The protein is Xanthine-guanine phosphoribosyltransferase of Rhodopseudomonas palustris (strain BisB5).